Reading from the N-terminus, the 222-residue chain is ATP synthase F(0) complex subunit a (222 aa).

The next 6 membrane-spanning stretches (helical) occupy residues alanine 7 to leucine 27, tryptophan 64 to leucine 84, glutamine 93 to phenylalanine 113, phenylalanine 132 to leucine 152, isoleucine 160 to valine 180, and isoleucine 197 to histidine 219.

Belongs to the ATPase A chain family. In terms of assembly, component of the ATP synthase complex composed at least of ATP5F1A/subunit alpha, ATP5F1B/subunit beta, ATP5MC1/subunit c (homooctomer), MT-ATP6/subunit a, MT-ATP8/subunit 8, ATP5ME/subunit e, ATP5MF/subunit f, ATP5MG/subunit g, ATP5MK/subunit k, ATP5MJ/subunit j, ATP5F1C/subunit gamma, ATP5F1D/subunit delta, ATP5F1E/subunit epsilon, ATP5PF/subunit F6, ATP5PB/subunit b, ATP5PD/subunit d, ATP5PO/subunit OSCP. ATP synthase complex consists of a soluble F(1) head domain (subunits alpha(3) and beta(3)) - the catalytic core - and a membrane F(0) domain - the membrane proton channel (subunits c, a, 8, e, f, g, k and j). These two domains are linked by a central stalk (subunits gamma, delta, and epsilon) rotating inside the F1 region and a stationary peripheral stalk (subunits F6, b, d, and OSCP). Interacts with DNAJC30; interaction is direct.

It is found in the mitochondrion inner membrane. It catalyses the reaction H(+)(in) = H(+)(out). Its function is as follows. Subunit a, of the mitochondrial membrane ATP synthase complex (F(1)F(0) ATP synthase or Complex V) that produces ATP from ADP in the presence of a proton gradient across the membrane which is generated by electron transport complexes of the respiratory chain. ATP synthase complex consist of a soluble F(1) head domain - the catalytic core - and a membrane F(1) domain - the membrane proton channel. These two domains are linked by a central stalk rotating inside the F(1) region and a stationary peripheral stalk. During catalysis, ATP synthesis in the catalytic domain of F(1) is coupled via a rotary mechanism of the central stalk subunits to proton translocation. With the subunit c (ATP5MC1), forms the proton-conducting channel in the F(0) domain, that contains two crucial half-channels (inlet and outlet) that facilitate proton movement from the mitochondrial intermembrane space (IMS) into the matrix. Protons are taken up via the inlet half-channel and released through the outlet half-channel, following a Grotthuss mechanism. The sequence is that of ATP synthase F(0) complex subunit a from Elephas maximus (Indian elephant).